Reading from the N-terminus, the 439-residue chain is MPIFIDRRLNPKDRSLGNRQRFLRRAREELKRSIRDRVRSGRISDADGEQAVSIPTRSTDEPRFEAAKDSGRREHVLPGNKHFVPGDRLRKPGHGAAGTPDPSMKDSEDDFRFVLSREEVLDLFFEDLELPDMVKLSLKEILAFRPRRAGFAATGSPTNINVGRTMRNSYGRRIALKRPKREEVDAIRQEIAELESGSQSPVARQRIAALQAEVERLERKRRLIAYVDPVDIRFNRFEAQPIPNAKAVMFCLMDVSGSMGEREKDLAKRFFVLLHLFLKCRYDRTEIVFISHTHEAQEVNEETFFYSTQSGGTVVSTALEKMHRIIAERYPGSEWNIYAAQASDGDNAAADSHRCITLLDEEIMRLCQYYAYVEIIDERERHIFGTTENGTSLWRAYSSVNANWPNFQMTRIADAADIYPVFRQLFTRQATAEKLRVRR.

Residues 39-106 (RSGRISDADG…AGTPDPSMKD (68 aa)) are disordered. Positions 58-76 (STDEPRFEAAKDSGRREHV) are enriched in basic and acidic residues.

Belongs to the UPF0229 family.

The chain is UPF0229 protein Nham_0975 from Nitrobacter hamburgensis (strain DSM 10229 / NCIMB 13809 / X14).